Here is a 528-residue protein sequence, read N- to C-terminus: Putative galacturonosyltransferase 2 (528 aa).

It belongs to the glycosyltransferase 8 family.

The protein operates within glycan metabolism; pectin biosynthesis. In terms of biological role, may be involved in pectin and/or xylans biosynthesis in cell walls. In Arabidopsis thaliana (Mouse-ear cress), this protein is Putative galacturonosyltransferase 2 (GAUT2).